The sequence spans 87 residues: DNA-directed RNA polymerase subunit omega (87 aa).

The protein belongs to the RNA polymerase subunit omega family. In terms of assembly, the RNAP catalytic core consists of 2 alpha, 1 beta, 1 beta' and 1 omega subunit. When a sigma factor is associated with the core the holoenzyme is formed, which can initiate transcription.

The enzyme catalyses RNA(n) + a ribonucleoside 5'-triphosphate = RNA(n+1) + diphosphate. Functionally, promotes RNA polymerase assembly. Latches the N- and C-terminal regions of the beta' subunit thereby facilitating its interaction with the beta and alpha subunits. This is DNA-directed RNA polymerase subunit omega from Pseudomonas fluorescens (strain SBW25).